Reading from the N-terminus, the 1454-residue chain is Coiled-coil domain-containing protein 18 (1454 aa).

A Phosphoserine modification is found at S45. 4 coiled-coil regions span residues 107–138 (APVD…HSLM), 170–402 (ILEE…ISQL), 438–464 (KLVI…NLTA), and 508–1309 (TMNK…SGHE). Residues 828–851 (QKQRESSAEKLRKMEEKCESAAHE) form a disordered region. S1355 bears the Phosphoserine mark.

It localises to the cytoplasm. The protein localises to the cytoskeleton. Its subcellular location is the microtubule organizing center. It is found in the centrosome. The protein resides in the centriolar satellite. In Homo sapiens (Human), this protein is Coiled-coil domain-containing protein 18 (CCDC18).